A 39-amino-acid chain; its full sequence is Natriuretic peptide TcNPa (39 aa).

The propeptide occupies 1–8 (SGSETAKI). Cys12 and Cys28 form a disulfide bridge. Thr35 is a glycosylation site (O-linked (GalNAc...) threonine).

This sequence belongs to the natriuretic peptide family. O-linked glycans consist of galactosyl-beta(1-3)-N-acetylgalactosamine (Gal-GalNAc). Post-translationally, the synthetic non-glycosylated form shows higher potency on natriuretic receptors (EC(50)=672.90 nM) and NPR2 (EC(50)=261.0 nM). In terms of tissue distribution, expressed by the venom gland.

The protein resides in the secreted. Functionally, snake venom natriuretic peptide that targets both NPR1 (EC(50)=1080.0 nM) and NPR2 (EC(50)=328.60 nM). Exhibits hypotensive and vasodepressor activities. In Tropidechis carinatus (Australian rough-scaled snake), this protein is Natriuretic peptide TcNPa.